Reading from the N-terminus, the 98-residue chain is C-X-C motif chemokine 10 (98 aa).

The signal sequence occupies residues 1-21 (MNQTAILICCLVFLTLSGIQG). Arginine 26 bears the Citrulline mark. Cystine bridges form between cysteine 30–cysteine 57 and cysteine 32–cysteine 74.

This sequence belongs to the intercrine alpha (chemokine CxC) family.

It localises to the secreted. Chemotactic for monocytes and T-lymphocytes. Binds to CXCR3. The protein is C-X-C motif chemokine 10 (CXCL10) of Macaca mulatta (Rhesus macaque).